Consider the following 252-residue polypeptide: Large ribosomal subunit protein uL4 (252 aa).

Belongs to the universal ribosomal protein uL4 family. As to quaternary structure, part of the 50S ribosomal subunit.

Functionally, one of the primary rRNA binding proteins, this protein initially binds near the 5'-end of the 23S rRNA. It is important during the early stages of 50S assembly. It makes multiple contacts with different domains of the 23S rRNA in the assembled 50S subunit and ribosome. In terms of biological role, forms part of the polypeptide exit tunnel. In Methanococcus maripaludis (strain C6 / ATCC BAA-1332), this protein is Large ribosomal subunit protein uL4.